Here is a 239-residue protein sequence, read N- to C-terminus: MGRKWNNIKDKKASKDANTSRIYAKFGREIYVAAKQGEPDPESNQALRVVLERAKTYNVPRTIIDRAVEKAKGGSEENYDELRYEGFGPNGAMVIVDTLTNNVNRTAADVRAAFSKNSGNMGVNGSVAYMFDATAVIGLEGKTSDEVLEILMEADVDARDILEEEDAVIVYAEPEQFHAVQSALKDAGVEEFTVAELTMLAQNDVTLPEDAQAQFEKMVDALEDLEDVQQVYHNVDLGE.

Belongs to the TACO1 family. YeeN subfamily.

The protein resides in the cytoplasm. The polypeptide is Probable transcriptional regulatory protein BT9727_0453 (Bacillus thuringiensis subsp. konkukian (strain 97-27)).